The chain runs to 254 residues: Triosephosphate isomerase, cytosolic (254 aa).

Asn10 and Lys12 together coordinate substrate. The active-site Electrophile is His96. The Proton acceptor role is filled by Glu166.

This sequence belongs to the triosephosphate isomerase family. In terms of assembly, homodimer.

It is found in the cytoplasm. It catalyses the reaction D-glyceraldehyde 3-phosphate = dihydroxyacetone phosphate. The protein operates within carbohydrate biosynthesis; gluconeogenesis. It functions in the pathway carbohydrate degradation; glycolysis; D-glyceraldehyde 3-phosphate from glycerone phosphate: step 1/1. This chain is Triosephosphate isomerase, cytosolic (TPIP1), found in Petunia hybrida (Petunia).